A 186-amino-acid polypeptide reads, in one-letter code: UPF0397 protein SGO_0469 (186 aa).

The next 5 helical transmembrane spans lie at 14-34 (VVATGIGAALFVVIGMVSIPT), 50-70 (LFGVVFGPIVGFLTGFIGHAL), 77-97 (GNPWWTWVLASGLFGLVVGLL), 119-139 (AQFVANALVWVVIAPLGDILI), and 152-172 (VVATVANGLTVAVAGTLLLIA).

It belongs to the UPF0397 family.

The protein resides in the cell membrane. The sequence is that of UPF0397 protein SGO_0469 from Streptococcus gordonii (strain Challis / ATCC 35105 / BCRC 15272 / CH1 / DL1 / V288).